An 813-amino-acid polypeptide reads, in one-letter code: Putative ATPase, plasma membrane-like (813 aa).

Residues 1-66 (MATGDSLEDI…KKKEHITLRF (66 aa)) are Cytoplasmic-facing. The chain crosses the membrane as a helical span at residues 67 to 86 (FALMFKPLSWVIQAAAIMAM). At 87–94 (LFANGDGR) the chain is on the extracellular side. Residues 95-115 (QLFLGIVCLLIVNTIICYLKE) traverse the membrane as a helical segment. Topologically, residues 116–245 (DDAANVVAMA…GHFRKVVTEI (130 aa)) are cytoplasmic. Residues 246-266 (ENLCVISIAIGISIEVIVMYW) form a helical membrane-spanning segment. Topologically, residues 267–275 (IQRRNFSDV) are extracellular. Residues 276–293 (INNLLVLVIGGIPLAMPT) form a helical membrane-spanning segment. Residues 294–555 (VLYVIMVTGS…ASRAILQQMK (262 aa)) lie on the Cytoplasmic side of the membrane. The active-site 4-aspartylphosphate intermediate is the Asp331. Mg(2+) is bound by residues Asp500 and Asp504. A helical membrane pass occupies residues 556-577 (HYTIYAVSITIRVVFGFMFIAL). The Extracellular segment spans residues 578–582 (IWKFD). A helical transmembrane segment spans residues 583–605 (FSPFMVLAIALLNEETTKAITMD). Residues 606-622 (NVTNPSPTPDSLKLKEI) are Cytoplasmic-facing. Residues 623-643 (FATGVVYGSYMALITVVFFWA) form a helical membrane-spanning segment. The Extracellular segment spans residues 644-664 (AYRTDIFPRTFHVRDLRGNEA). The chain crosses the membrane as a helical span at residues 665 to 685 (EMMCALYLQVSIMSQALFFVI). Residues 686 to 697 (QSRSWFFVERPG) lie on the Cytoplasmic side of the membrane. Residues 698 to 718 (ELLFLSFVTVQTIATTLAVYA) traverse the membrane as a helical segment. At 719-726 (SWETARIE) the chain is on the extracellular side. Residues 727-747 (GIGWSWAGVIWLYNIIFFFPL) traverse the membrane as a helical segment. The Cytoplasmic segment spans residues 748–813 (DIMKFGIRYI…SQDLRGVGWV (66 aa)). Ser776 bears the Phosphoserine mark.

Belongs to the cation transport ATPase (P-type) (TC 3.A.3) family. Type IIIA subfamily.

The protein localises to the membrane. This chain is Putative ATPase, plasma membrane-like, found in Arabidopsis thaliana (Mouse-ear cress).